A 231-amino-acid polypeptide reads, in one-letter code: Inner membrane protein YohK (231 aa).

M1 is a topological domain (periplasmic). The helical transmembrane segment at 2–22 (MANIWWSLPLTLIVFFAARKL) threads the bilayer. Topologically, residues 23–29 (AARYKFP) are cytoplasmic. Residues 30–50 (LLNPLLVAMVVIIPFLMLTGI) form a helical membrane-spanning segment. At 51–90 (SYDSYFKGSEVLNDLLQPAVVALAYPLYEQLHQIRARWKS) the chain is on the periplasmic side. The helical transmembrane segment at 91–111 (IITICFIGSVVAMVTGTSVAL) threads the bilayer. The Cytoplasmic segment spans residues 112-118 (LMGASPE). A run of 2 helical transmembrane segments spans residues 119 to 139 (IAAS…VGGS) and 140 to 160 (IGGI…LGAV). The Cytoplasmic portion of the chain corresponds to 161–208 (FGHTLLNAMRIRTKAARGLAMGTASHALGTARCAELDYQEGAFSSLAL). The chain crosses the membrane as a helical span at residues 209-229 (VLCGIITSLIAPFLFPIILAV). The Periplasmic segment spans residues 230-231 (MG).

It belongs to the YohK (E.coli)/YwbG (IPA-22R) (B.subtilis) family.

Its subcellular location is the cell inner membrane. This Escherichia coli (strain K12) protein is Inner membrane protein YohK (yohK).